Here is a 76-residue protein sequence, read N- to C-terminus: uncharacterized protein (76 aa).

This sequence belongs to the IIV-6 342R family.

This is an uncharacterized protein from Invertebrate iridescent virus 3 (IIV-3).